A 243-amino-acid chain; its full sequence is Carboxy-S-adenosyl-L-methionine synthase (243 aa).

Residues Tyr-40, 65–67, 90–91, 118–119, Asn-133, and Arg-200 contribute to the S-adenosyl-L-methionine site; these read GCS, DN, and DI.

The protein belongs to the class I-like SAM-binding methyltransferase superfamily. Cx-SAM synthase family. As to quaternary structure, homodimer.

The enzyme catalyses prephenate + S-adenosyl-L-methionine = carboxy-S-adenosyl-L-methionine + 3-phenylpyruvate + H2O. Catalyzes the conversion of S-adenosyl-L-methionine (SAM) to carboxy-S-adenosyl-L-methionine (Cx-SAM). The sequence is that of Carboxy-S-adenosyl-L-methionine synthase from Shewanella baltica (strain OS155 / ATCC BAA-1091).